We begin with the raw amino-acid sequence, 570 residues long: Dihydroxy-acid dehydratase (570 aa).

Position 61 (C61) interacts with [2Fe-2S] cluster. D94 lines the Mg(2+) pocket. C135 lines the [2Fe-2S] cluster pocket. Mg(2+) is bound by residues D136 and K137. N6-carboxylysine is present on K137. Residue C207 participates in [2Fe-2S] cluster binding. E459 contributes to the Mg(2+) binding site. The Proton acceptor role is filled by S485.

This sequence belongs to the IlvD/Edd family. In terms of assembly, homodimer. It depends on [2Fe-2S] cluster as a cofactor. The cofactor is Mg(2+).

It catalyses the reaction (2R)-2,3-dihydroxy-3-methylbutanoate = 3-methyl-2-oxobutanoate + H2O. It carries out the reaction (2R,3R)-2,3-dihydroxy-3-methylpentanoate = (S)-3-methyl-2-oxopentanoate + H2O. Its pathway is amino-acid biosynthesis; L-isoleucine biosynthesis; L-isoleucine from 2-oxobutanoate: step 3/4. It functions in the pathway amino-acid biosynthesis; L-valine biosynthesis; L-valine from pyruvate: step 3/4. Functions in the biosynthesis of branched-chain amino acids. Catalyzes the dehydration of (2R,3R)-2,3-dihydroxy-3-methylpentanoate (2,3-dihydroxy-3-methylvalerate) into 2-oxo-3-methylpentanoate (2-oxo-3-methylvalerate) and of (2R)-2,3-dihydroxy-3-methylbutanoate (2,3-dihydroxyisovalerate) into 2-oxo-3-methylbutanoate (2-oxoisovalerate), the penultimate precursor to L-isoleucine and L-valine, respectively. This chain is Dihydroxy-acid dehydratase, found in Lactococcus lactis subsp. cremoris (strain SK11).